The primary structure comprises 301 residues: Probable alpha-L-glutamate ligase (301 aa).

Residues 104–287 (LQLLSRKGIG…VAGMIFDFIE (184 aa)) form the ATP-grasp domain. Residues K141, 178-179 (EF), D187, and 211-213 (RSN) contribute to the ATP site. D248, E260, and N262 together coordinate Mg(2+). Mn(2+) contacts are provided by D248, E260, and N262.

This sequence belongs to the RimK family. It depends on Mg(2+) as a cofactor. Requires Mn(2+) as cofactor.

This Vibrio parahaemolyticus serotype O3:K6 (strain RIMD 2210633) protein is Probable alpha-L-glutamate ligase.